The following is a 442-amino-acid chain: Putative FNIP repeat-containing protein L170 (442 aa).

3 FNIP repeats span residues 213–252 (FNSSINSLRNNIRVLKLGNSFNKPIDILPELLEELYIGRG), 253–294 (FNSE…LGCF), and 295–348 (FNQS…FGMY).

In Acanthamoeba polyphaga mimivirus (APMV), this protein is Putative FNIP repeat-containing protein L170.